A 499-amino-acid chain; its full sequence is Potassium channel subfamily K member 5 (499 aa).

Topologically, residues 1 to 7 are cytoplasmic; it reads MVDRGPL. The helical transmembrane segment at 8–26 threads the bilayer; the sequence is LTSAIIFYLAIGAAIFEVL. An N-linked (GlcNAc...) asparagine glycan is attached at Asn-77. Residues 85-112 constitute an intramembrane region (pore-forming); the sequence is WPNAMIFAATVITTIGYGNVAPKTPAGR. Residues Thr-98, Ile-99, Gly-100, and Tyr-101 each coordinate K(+). Residues 98 to 103 form a selectivity filter 1 region; sequence TIGYGN. Residues 113–133 form a helical membrane-spanning segment; sequence LFCVFYGLFGVPLCLTWISAL. Over 134–157 the chain is Cytoplasmic; it reads GKFFGGRAKRLGQFLTKRGVSLRK. Residues 158-180 form a helical membrane-spanning segment; sequence AQITCTVIFIVWGVLVHLVIPPF. Residues 190 to 215 constitute an intramembrane region (pore-forming); it reads YIEGLYYSFITISTIGFGDFVAGVNP. 4 residues coordinate K(+): Thr-203, Ile-204, Gly-205, and Phe-206. The selectivity filter 2 stretch occupies residues 203–208; sequence TIGFGD. A helical transmembrane segment spans residues 230–250; it reads WIYLGLAWLSLFVNWKVSMFV. Residues 251–325 are Cytoplasmic-facing; that stretch reads EVHKAIKKRR…SGGGETGPGP (75 aa). Disordered regions lie at residues 312–335, 360–388, and 428–499; these read AMKTSGGGETGPGPGLGPQGGGLP, QTLRSKGHVSRSPDEEAVARAPEDSSPAP, and GLSD…PKGT. Residues 316–334 show a composition bias toward gly residues; the sequence is SGGGETGPGPGLGPQGGGL. The span at 370 to 382 shows a compositional bias: basic and acidic residues; that stretch reads RSPDEEAVARAPE. Ser-371 bears the Phosphoserine mark. Over residues 466 to 480 the composition is skewed to low complexity; sequence SSSESTFTSTESELS.

It belongs to the two pore domain potassium channel (TC 1.A.1.8) family. In terms of assembly, homodimer; disulfide-linked. Heterodimer with KCNK16 and KCNK17. In terms of tissue distribution, abundant expression in kidney, also detected in liver, placenta and small intestine. In the kidney, expression is restricted to the distal tubules and collecting ducts. Not expressed in proximal tubules or glomeruli. Expressed in pancreas, in both endocrine (alpha, beta, gamma, delta, and epsilon) and exocrine (acinar and ductal) cells.

The protein localises to the membrane. It catalyses the reaction K(+)(in) = K(+)(out). The channel conductance is stimulated by extracellular alkaline pH. Inhibited by quinine, quinidine and external acidification. K(+) channel that conducts voltage-dependent outward rectifying currents upon membrane depolarization. Voltage sensing is coupled to K(+) electrochemical gradient in an 'ion flux gating' mode where outward but not inward ion flow opens the gate. Homo- and heterodimerizes to form functional channels with distinct regulatory and gating properties. The protein is Potassium channel subfamily K member 5 of Homo sapiens (Human).